The following is a 633-amino-acid chain: Threonine--tRNA ligase (633 aa).

A TGS domain is found at 1-61 (MINISFPDGS…DNDCRLRILT (61 aa)). The tract at residues 242 to 533 (DHRKLGKELD…LIEEYAGRFP (292 aa)) is catalytic. Zn(2+)-binding residues include Cys-333, His-384, and His-510.

Belongs to the class-II aminoacyl-tRNA synthetase family. Homodimer. Requires Zn(2+) as cofactor.

It localises to the cytoplasm. The catalysed reaction is tRNA(Thr) + L-threonine + ATP = L-threonyl-tRNA(Thr) + AMP + diphosphate + H(+). Functionally, catalyzes the attachment of threonine to tRNA(Thr) in a two-step reaction: L-threonine is first activated by ATP to form Thr-AMP and then transferred to the acceptor end of tRNA(Thr). Also edits incorrectly charged L-seryl-tRNA(Thr). The chain is Threonine--tRNA ligase from Rickettsia bellii (strain OSU 85-389).